A 291-amino-acid chain; its full sequence is Formamidopyrimidine-DNA glycosylase (291 aa).

Residue Pro2 is the Schiff-base intermediate with DNA of the active site. The Proton donor role is filled by Glu3. Residue Lys60 is the Proton donor; for beta-elimination activity of the active site. Residues His108 and Arg127 each contribute to the DNA site. The segment at Trp257–Arg291 adopts an FPG-type zinc-finger fold. The Proton donor; for delta-elimination activity role is filled by Arg281.

It belongs to the FPG family. In terms of assembly, monomer. Zn(2+) is required as a cofactor.

It carries out the reaction Hydrolysis of DNA containing ring-opened 7-methylguanine residues, releasing 2,6-diamino-4-hydroxy-5-(N-methyl)formamidopyrimidine.. The enzyme catalyses 2'-deoxyribonucleotide-(2'-deoxyribose 5'-phosphate)-2'-deoxyribonucleotide-DNA = a 3'-end 2'-deoxyribonucleotide-(2,3-dehydro-2,3-deoxyribose 5'-phosphate)-DNA + a 5'-end 5'-phospho-2'-deoxyribonucleoside-DNA + H(+). In terms of biological role, involved in base excision repair of DNA damaged by oxidation or by mutagenic agents. Acts as a DNA glycosylase that recognizes and removes damaged bases. Has a preference for oxidized purines, such as 7,8-dihydro-8-oxoguanine (8-oxoG). Has AP (apurinic/apyrimidinic) lyase activity and introduces nicks in the DNA strand. Cleaves the DNA backbone by beta-delta elimination to generate a single-strand break at the site of the removed base with both 3'- and 5'-phosphates. The sequence is that of Formamidopyrimidine-DNA glycosylase from Prochlorococcus marinus (strain MIT 9313).